A 66-amino-acid polypeptide reads, in one-letter code: Hemicalcin (66 aa).

The first 21 residues, methionine 1–serine 21, serve as a signal peptide directing secretion. Positions threonine 22–arginine 33 are excised as a propeptide. 3 disulfides stabilise this stretch: cysteine 36-cysteine 50, cysteine 43-cysteine 54, and cysteine 49-cysteine 65. The tract at residues lysine 55–arginine 57 is essential for stimulation of [3H]ryanodine binding to RYR1.

It belongs to the scorpion calcin family. As to expression, expressed by the venom gland.

It localises to the secreted. This toxin stabilizes ryanodine receptor 1 (RyR1) opening in a long-lasting subconductance state (20% and 38% of the full conductance state have been found). It promotes an increase in the opening probability at intermediate concentration. Furthermore, it triggers calcium release from sarcoplasmic vesicles (68 nM are enough to induce a sharp release, and 45% of the total calcium is released after toxin (100 nM) addition) probably by acting as a cell-penetrating peptide (CPP). In addition, it has been shown to dose-dependently stimulate ryanodine binding to RyR1 (EC(50)=6.9-71 nM). It also augments the bell-shaped calcium-[3H]ryanodine binding curve that is maximal at about 10 uM calcium concentration. It binds a different site as ryanodine. It acts synergistically with caffeine. In vivo, intracerebroventricular injection into mice induces neurotoxic symptoms, followed by death. This chain is Hemicalcin, found in Hemiscorpius lepturus (Scorpion).